A 196-amino-acid chain; its full sequence is Small ribosomal subunit protein uS4c (196 aa).

Positions 89–157 (MRLDNILFRL…VQNYIASSDP (69 aa)) constitute an S4 RNA-binding domain.

It belongs to the universal ribosomal protein uS4 family. Part of the 30S ribosomal subunit. Contacts protein S5. The interaction surface between S4 and S5 is involved in control of translational fidelity.

Its subcellular location is the plastid. The protein localises to the chloroplast. Functionally, one of the primary rRNA binding proteins, it binds directly to 16S rRNA where it nucleates assembly of the body of the 30S subunit. In terms of biological role, with S5 and S12 plays an important role in translational accuracy. In Elymus canadensis (Canada wild rye), this protein is Small ribosomal subunit protein uS4c (rps4).